The sequence spans 264 residues: Small ribosomal subunit protein uS2 (264 aa).

Positions 228-264 (HEDVSAGPVEEQSDEAQAAEQGTEGDTAQLTSSQGRS) are disordered. Polar residues predominate over residues 251-264 (EGDTAQLTSSQGRS).

The protein belongs to the universal ribosomal protein uS2 family.

The sequence is that of Small ribosomal subunit protein uS2 from Deinococcus radiodurans (strain ATCC 13939 / DSM 20539 / JCM 16871 / CCUG 27074 / LMG 4051 / NBRC 15346 / NCIMB 9279 / VKM B-1422 / R1).